Consider the following 577-residue polypeptide: Adenine deaminase (577 aa).

This sequence belongs to the metallo-dependent hydrolases superfamily. Adenine deaminase family. The cofactor is Mn(2+).

The enzyme catalyses adenine + H2O + H(+) = hypoxanthine + NH4(+). This is Adenine deaminase (adeC) from Bacillus subtilis (strain 168).